The following is a 618-amino-acid chain: Matrix metalloproteinase-24 (618 aa).

The signal sequence occupies residues M1–G41. Positions A42–R128 are excised as a propeptide. Residues A42–A575 lie on the Extracellular side of the membrane. Residues P110–H117 carry the Cysteine switch motif. Positions 112 and 255 each coordinate Zn(2+). The active site involves E256. H259 and H265 together coordinate Zn(2+). Residues Q296–I352 are disordered. Residues P302 to T314 show a composition bias toward pro residues. Hemopexin repeat units follow at residues P350–L398, P399–L444, R446–P494, and Q495–C542. C353 and C542 form a disulfide bridge. Residues V576 to F596 form a helical membrane-spanning segment. Over Q597 to V618 the chain is Cytoplasmic. The PDZ-binding signature appears at E616–V618.

This sequence belongs to the peptidase M10A family. Interacts with GRIP1 and GRIP2. Interacts (via PDZ-binding motif) with APBA3 (via PDZ domain). Zn(2+) serves as cofactor. Ca(2+) is required as a cofactor. Post-translationally, cleaved by a furin endopeptidase in the trans-Golgi network. Mainly expressed in neuronal cells of both central and peripheral nervous systems. Expressed by CGRP-containing peptidergic nociceptors in dorsal root ganglia. Expressed in adult neural stem cell and ependymocytes. Expressed at low level in testis.

Its subcellular location is the cell membrane. The protein resides in the golgi apparatus. It is found in the trans-Golgi network membrane. The protein localises to the secreted. It localises to the extracellular space. Its subcellular location is the extracellular matrix. Functionally, metalloprotease that mediates cleavage of N-cadherin (CDH2) and acts as a regulator of neuro-immune interactions and neural stem cell quiescence. Involved in cell-cell interactions between nociceptive neurites and mast cells, possibly by mediating cleavage of CDH2, thereby acting as a mediator of peripheral thermal nociception and inflammatory hyperalgesia. Key regulator of neural stem cells quiescence by mediating cleavage of CDH2, affecting CDH2-mediated anchorage of neural stem cells to ependymocytes in the adult subependymal zone, leading to modulate their quiescence. May play a role in axonal growth. Able to activate progelatinase A. May also be a proteoglycanase involved in degradation of proteoglycans, such as dermatan sulfate and chondroitin sulfate proteoglycans. Cleaves partially fibronectin, but not collagen type I, nor laminin. This chain is Matrix metalloproteinase-24 (Mmp24), found in Mus musculus (Mouse).